The chain runs to 391 residues: MAIINMTDLDLTNKRVLIRQDLNVPVSDGMVTSDARLRASLPTIQLALDKGAAVMVMSHLGRPTEGEFNNEFSLQPVVDYLAKALKSPVRLATDYLDGVEANVGEVVVFENVRFNQGEGKNDEALSKKMAALCDVYVMDAFGTAHRAQASTHGVGMFAPIACAGPLLAQELDALGKALDNPARPMVAIVGGSKVSTKLTVLESLSGIVDQLVVGGGIANTFIAAAGFNVGKSLYEADLVDEAKRLVANARSRGGDIPVPTDVVVASEFSPTAAAKLVDVSQVSDTDMIFDIGPDSAEALAKIIETAGTIVWNGPVGVFEFDQFGKGTERIARAIADSKAFSIAGGGDTLAAVDKYNIADKVSYISTGGGAFLEFLEGKELPAVAMLEKRGA.

Substrate contacts are provided by residues 21-23 (DLN), Arg36, 59-62 (HLGR), Arg113, and Arg146. ATP contacts are provided by residues Lys197, Glu319, and 345–348 (GGDT).

The protein belongs to the phosphoglycerate kinase family. As to quaternary structure, monomer.

The protein localises to the cytoplasm. It catalyses the reaction (2R)-3-phosphoglycerate + ATP = (2R)-3-phospho-glyceroyl phosphate + ADP. Its pathway is carbohydrate degradation; glycolysis; pyruvate from D-glyceraldehyde 3-phosphate: step 2/5. The polypeptide is Phosphoglycerate kinase (Shewanella denitrificans (strain OS217 / ATCC BAA-1090 / DSM 15013)).